A 34-amino-acid polypeptide reads, in one-letter code: Cuticle protein 9 (34 aa).

The protein is Cuticle protein 9 of Blaberus craniifer (Death's head cockroach).